A 193-amino-acid polypeptide reads, in one-letter code: Acyl carrier protein phosphodiesterase (193 aa).

Belongs to the AcpH family.

The catalysed reaction is holo-[ACP] + H2O = apo-[ACP] + (R)-4'-phosphopantetheine + H(+). Its function is as follows. Converts holo-ACP to apo-ACP by hydrolytic cleavage of the phosphopantetheine prosthetic group from ACP. This Shigella boydii serotype 4 (strain Sb227) protein is Acyl carrier protein phosphodiesterase.